The primary structure comprises 463 residues: Glutamate--tRNA ligase 1 (463 aa).

The 'HIGH' region motif lies at 10–20 (PSPTGYLHIGG). The 'KMSKS' region motif lies at 238 to 242 (KLSKR). Lys-241 contributes to the ATP binding site.

Belongs to the class-I aminoacyl-tRNA synthetase family. Glutamate--tRNA ligase type 1 subfamily. In terms of assembly, monomer.

The protein resides in the cytoplasm. It catalyses the reaction tRNA(Glu) + L-glutamate + ATP = L-glutamyl-tRNA(Glu) + AMP + diphosphate. In terms of biological role, catalyzes the attachment of glutamate to tRNA(Glu) in a two-step reaction: glutamate is first activated by ATP to form Glu-AMP and then transferred to the acceptor end of tRNA(Glu). The protein is Glutamate--tRNA ligase 1 of Helicobacter pylori (strain J99 / ATCC 700824) (Campylobacter pylori J99).